We begin with the raw amino-acid sequence, 500 residues long: Aromatic-L-amino-acid decarboxylase (500 aa).

P102 provides a ligand contact to L-tryptophan. S168 lines the pyridoxal 5'-phosphate pocket. An L-tryptophan-binding site is contributed by H203. T262 is a pyridoxal 5'-phosphate binding site. H318 serves as a coordination point for L-tryptophan. The residue at position 319 (K319) is an N6-(pyridoxal phosphate)lysine. Y348 contacts L-tryptophan.

Belongs to the group II decarboxylase family. In terms of assembly, homodimer. It depends on pyridoxal 5'-phosphate as a cofactor.

The enzyme catalyses L-tryptophan + H(+) = tryptamine + CO2. It carries out the reaction 5-hydroxy-L-tryptophan + H(+) = serotonin + CO2. Catalyzes the decarboxylation of L-tryptophan to tryptamine and L-5-hydroxytryptophan to serotonin, respectively. In Catharanthus roseus (Madagascar periwinkle), this protein is Aromatic-L-amino-acid decarboxylase.